The sequence spans 111 residues: Large ribosomal subunit protein uL22 (111 aa).

The protein belongs to the universal ribosomal protein uL22 family. As to quaternary structure, part of the 50S ribosomal subunit.

Its function is as follows. This protein binds specifically to 23S rRNA; its binding is stimulated by other ribosomal proteins, e.g. L4, L17, and L20. It is important during the early stages of 50S assembly. It makes multiple contacts with different domains of the 23S rRNA in the assembled 50S subunit and ribosome. The globular domain of the protein is located near the polypeptide exit tunnel on the outside of the subunit, while an extended beta-hairpin is found that lines the wall of the exit tunnel in the center of the 70S ribosome. This chain is Large ribosomal subunit protein uL22, found in Clostridium perfringens (strain ATCC 13124 / DSM 756 / JCM 1290 / NCIMB 6125 / NCTC 8237 / Type A).